The following is a 112-amino-acid chain: T cell receptor alpha variable 9-2 (112 aa).

The N-terminal stretch at methionine 1–glycine 20 is a signal peptide. Residues aspartate 21–serine 112 form the Ig-like domain. Asparagine 41 carries N-linked (GlcNAc...) asparagine glycosylation. A disulfide bridge connects residues cysteine 42 and cysteine 109.

In terms of assembly, alpha-beta TR is a heterodimer composed of an alpha and beta chain; disulfide-linked. The alpha-beta TR is associated with the transmembrane signaling CD3 coreceptor proteins to form the TR-CD3 (TcR or TCR). The assembly of alpha-beta TR heterodimers with CD3 occurs in the endoplasmic reticulum where a single alpha-beta TR heterodimer associates with one CD3D-CD3E heterodimer, one CD3G-CD3E heterodimer and one CD247 homodimer forming a stable octameric structure. CD3D-CD3E and CD3G-CD3E heterodimers preferentially associate with TR alpha and TR beta chains, respectively. The association of the CD247 homodimer is the last step of TcR assembly in the endoplasmic reticulum and is required for transport to the cell surface.

The protein localises to the cell membrane. Its function is as follows. V region of the variable domain of T cell receptor (TR) alpha chain that participates in the antigen recognition. Alpha-beta T cell receptors are antigen specific receptors which are essential to the immune response and are present on the cell surface of T lymphocytes. Recognize peptide-major histocompatibility (MH) (pMH) complexes that are displayed by antigen presenting cells (APC), a prerequisite for efficient T cell adaptive immunity against pathogens. Binding of alpha-beta TR to pMH complex initiates TR-CD3 clustering on the cell surface and intracellular activation of LCK that phosphorylates the ITAM motifs of CD3G, CD3D, CD3E and CD247 enabling the recruitment of ZAP70. In turn ZAP70 phosphorylates LAT, which recruits numerous signaling molecules to form the LAT signalosome. The LAT signalosome propagates signal branching to three major signaling pathways, the calcium, the mitogen-activated protein kinase (MAPK) kinase and the nuclear factor NF-kappa-B (NF-kB) pathways, leading to the mobilization of transcription factors that are critical for gene expression and essential for T cell growth and differentiation. The T cell repertoire is generated in the thymus, by V-(D)-J rearrangement. This repertoire is then shaped by intrathymic selection events to generate a peripheral T cell pool of self-MH restricted, non-autoaggressive T cells. Post-thymic interaction of alpha-beta TR with the pMH complexes shapes TR structural and functional avidity. The sequence is that of T cell receptor alpha variable 9-2 from Homo sapiens (Human).